A 35-amino-acid polypeptide reads, in one-letter code: Antimicrobial peptide 3 (35 aa).

The Chitin-binding type-1 domain occupies 4–35 (GGECGGRFGGCAGGQCCSRFGFCGSGPKYCAH). Disulfide bonds link Cys7–Cys20, Cys14–Cys26, and Cys19–Cys33.

Contains 3 disulfide bonds. As to expression, expressed in leaf, flower, stem and seed with highest expression in leaf (at protein level).

Its function is as follows. Has antifungal activity against A.niger (IC(50)=5.4 uM), B.sorokiniana (IC(50)=2.0 uM), B.cinerea (IC(50)=1.6 uM), F.solani (IC(50)=3.7 uM) and A.alternata (IC(50)=5.0 uM). Binds chitin in vitro. Has no antibacterial activity at concentrations up to 10 uM. This is Antimicrobial peptide 3 from Stellaria media (Common chickweed).